Reading from the N-terminus, the 122-residue chain is Large ribosomal subunit protein uL18 (122 aa).

The protein belongs to the universal ribosomal protein uL18 family. In terms of assembly, part of the 50S ribosomal subunit; part of the 5S rRNA/L5/L18/L25 subcomplex. Contacts the 5S and 23S rRNAs.

This is one of the proteins that bind and probably mediate the attachment of the 5S RNA into the large ribosomal subunit, where it forms part of the central protuberance. In Petrotoga mobilis (strain DSM 10674 / SJ95), this protein is Large ribosomal subunit protein uL18.